The following is a 97-amino-acid chain: Sec-independent protein translocase protein TatA (97 aa).

The helical transmembrane segment at 1-21 threads the bilayer; that stretch reads MGFNIWSLLIILLIVALLFGT. The disordered stretch occupies residues 28 to 97; that stretch reads GGDLGGAIRG…SAEHHDRSTS (70 aa). Over residues 37–56 the composition is skewed to basic and acidic residues; sequence GFKESMREGEEEEAQKRADG. Residues 78–87 are compositionally biased toward low complexity; that stretch reads QARESSSARQ. Over residues 88 to 97 the composition is skewed to basic and acidic residues; the sequence is SAEHHDRSTS.

It belongs to the TatA/E family. In terms of assembly, the Tat system comprises two distinct complexes: a TatABC complex, containing multiple copies of TatA, TatB and TatC subunits, and a separate TatA complex, containing only TatA subunits. Substrates initially bind to the TatABC complex, which probably triggers association of the separate TatA complex to form the active translocon.

Its subcellular location is the cell inner membrane. In terms of biological role, part of the twin-arginine translocation (Tat) system that transports large folded proteins containing a characteristic twin-arginine motif in their signal peptide across membranes. TatA could form the protein-conducting channel of the Tat system. The polypeptide is Sec-independent protein translocase protein TatA (Halorhodospira halophila (strain DSM 244 / SL1) (Ectothiorhodospira halophila (strain DSM 244 / SL1))).